The following is a 345-amino-acid chain: Flotillin-like protein FloA 1 (345 aa).

The helical transmembrane segment at L26–F46 threads the bilayer.

This sequence belongs to the flotillin-like FloA family. As to quaternary structure, homooligomerizes.

The protein localises to the cell membrane. It is found in the membrane raft. Found in functional membrane microdomains (FMM) that may be equivalent to eukaryotic membrane rafts. FMMs are highly dynamic and increase in number as cells age. Flotillins are thought to be important factors in membrane fluidity. The protein is Flotillin-like protein FloA 1 of Rhodopirellula baltica (strain DSM 10527 / NCIMB 13988 / SH1).